Here is a 110-residue protein sequence, read N- to C-terminus: U1-lycotoxin-Ls1gg (110 aa).

Positions 1–20 (MKFVLLFGVLLVTLFSYSSA) are cleaved as a signal peptide. Positions 21 to 44 (EMLDDFDQADEDELLSLIEKEEAR) are excised as a propeptide. Cystine bridges form between Cys-54-Cys-71, Cys-61-Cys-89, and Cys-73-Cys-87.

It belongs to the neurotoxin 19 (CSTX) family. 03 subfamily. As to expression, expressed by the venom gland.

The protein resides in the secreted. This chain is U1-lycotoxin-Ls1gg, found in Lycosa singoriensis (Wolf spider).